Reading from the N-terminus, the 360-residue chain is CFA/I fimbrial subunit E (360 aa).

The protein resides in the fimbrium. The sequence is that of CFA/I fimbrial subunit E (cfaE) from Escherichia coli.